Here is a 173-residue protein sequence, read N- to C-terminus: MAEKRNIFLVGPMGAGKSTIGRQLAQQLNMEFYDSDQEIEKRTGADVGWVFDLEGEEGFRDREEKVINELTEKQGIVLATGGGSVKSRETRNRLSARGVVVYLETTIEKQLARTQRDKKRPLLHVETPPREVLEALANERNPLYEEIADVTIRTDDQSAKVVANQIIHMLESN.

14-19 lines the ATP pocket; it reads GAGKST. S18 contributes to the Mg(2+) binding site. D36, R60, and G82 together coordinate substrate. R120 provides a ligand contact to ATP. R140 is a substrate binding site. Q157 is an ATP binding site.

This sequence belongs to the shikimate kinase family. As to quaternary structure, monomer. Requires Mg(2+) as cofactor.

It is found in the cytoplasm. It catalyses the reaction shikimate + ATP = 3-phosphoshikimate + ADP + H(+). The protein operates within metabolic intermediate biosynthesis; chorismate biosynthesis; chorismate from D-erythrose 4-phosphate and phosphoenolpyruvate: step 5/7. Its function is as follows. Catalyzes the specific phosphorylation of the 3-hydroxyl group of shikimic acid using ATP as a cosubstrate. This chain is Shikimate kinase 1, found in Shigella boydii serotype 18 (strain CDC 3083-94 / BS512).